The primary structure comprises 881 residues: Sodium/potassium/calcium exchanger Nckx30C (881 aa).

The Extracellular segment spans residues 1–194 (MLQPTTCSKQ…SRCRSRRCLR (194 aa)). Asparagine 69 is a glycosylation site (N-linked (GlcNAc...) asparagine). Disordered stretches follow at residues 79-111 (DMLSAGRSRSSSTTIDFNSRRRRGRLRGHAPSD), 149-181 (AKTRSRTAAQLPATSAASATSSRGASAEQLLHP), 215-255 (AAKP…TSGE), and 272-315 (GLEE…TTKT). Polar residues predominate over residues 85-95 (RSRSSSTTIDF). The segment covering 149 to 175 (AKTRSRTAAQLPATSAASATSSRGASA) has biased composition (low complexity). Residues 195-215 (LPIYSILLLCLTTQGLGLGDA) traverse the membrane as a helical segment. The Cytoplasmic portion of the chain corresponds to 216 to 330 (AKPRPAKQHF…DLFTKEQLEN (115 aa)). A compositionally biased stretch (low complexity) spans 228-240 (SNSNSPNQNQNHN). Residues 296–315 (AGNQRGINDTHNDNSTTTKT) show a composition bias toward polar residues. Residues 331–351 (GAVILHIIGVIYMFVALAIVC) traverse the membrane as a helical segment. Residues 352-375 (DEFFVPSLDVIIEKLGITDDVAGA) are Extracellular-facing. The Alpha-1 repeat unit spans residues 372–412 (VAGATFMAAGGSAPELFTSVIGVFVSFDDVGIGTIVGSAVF). The helical transmembrane segment at 376–396 (TFMAAGGSAPELFTSVIGVFV) threads the bilayer. At 397-402 (SFDDVG) the chain is on the cytoplasmic side. The helical transmembrane segment at 403–423 (IGTIVGSAVFNILFVIGMCAL) threads the bilayer. The Extracellular portion of the chain corresponds to 424-433 (FSKTVLSLTW). A helical membrane pass occupies residues 434–454 (WPLFRDCSFYSISLLVLIYFF). Residues 455–458 (RDNR) are Cytoplasmic-facing. A helical membrane pass occupies residues 459–479 (IFWWEALILFTIYIGYVAFMK). Over 480–720 (WNVQVETCVK…PDTRTPRGKR (241 aa)) the chain is Extracellular. The interval 508 to 565 (PAGNAANSSETSMATQPGGSVTSRAASETRSGPPGSSNAGATGNSSGGGGTSGSTQTG) is disordered. Residues 512–537 (AANSSETSMATQPGGSVTSRAASETR) show a composition bias toward polar residues. N-linked (GlcNAc...) asparagine glycosylation is found at asparagine 514 and asparagine 551. Residues 542-551 (GSSNAGATGN) show a composition bias toward low complexity. A helical transmembrane segment spans residues 721 to 741 (FFPVTFIGSIVWIAAFSYLMV). Topologically, residues 742 to 756 (WWANVAGDTARIPPE) are cytoplasmic. A helical membrane pass occupies residues 757–777 (VMGLTFLAAGTSIPDLITSVI). The stretch at 764–795 (AAGTSIPDLITSVIVARKGFGDMAVSSSVGSN) is one Alpha-2 repeat. At 778-795 (VARKGFGDMAVSSSVGSN) the chain is on the extracellular side. Residues 796 to 816 (IFDVTVGLPIPWLLYGIIYGA) form a helical membrane-spanning segment. The Cytoplasmic segment spans residues 817–822 (PVEVNS). A helical transmembrane segment spans residues 823–843 (VGMVCSITILFMMLVFVVMSI). The Extracellular portion of the chain corresponds to 844–852 (ACFRWRMNK). Residues 853-873 (GLGFTMFLLYFAFVAVSLMFE) traverse the membrane as a helical segment. The Cytoplasmic segment spans residues 874 to 881 (YDVITCPF).

It belongs to the Ca(2+):cation antiporter (CaCA) (TC 2.A.19) family. SLC24A subfamily. Expressed in the adult nervous system. Expressed in the photoreceptor cells as well as in the lamina, medulla, and optic lobes of the brain.

The protein localises to the membrane. In terms of biological role, may function in the removal and maintenance of calcium homeostasis during signaling in the adult and in signaling events during embryogenesis and patterning of imaginal disks. Transports one Ca(2+) and 1 K(+) in exchange for 4 Na(+). This is Sodium/potassium/calcium exchanger Nckx30C (Nckx30C) from Drosophila melanogaster (Fruit fly).